We begin with the raw amino-acid sequence, 251 residues long: Precorrin-4 C(11)-methyltransferase (251 aa).

The protein belongs to the precorrin methyltransferase family.

The enzyme catalyses precorrin-4 + S-adenosyl-L-methionine = precorrin-5 + S-adenosyl-L-homocysteine. Its pathway is cofactor biosynthesis; adenosylcobalamin biosynthesis; cob(II)yrinate a,c-diamide from precorrin-2 (aerobic route): step 4/10. Functionally, catalyzes the methylation of C-11 in precorrin-4 to form precorrin-5. The chain is Precorrin-4 C(11)-methyltransferase (cobM) from Mycobacterium tuberculosis (strain CDC 1551 / Oshkosh).